The following is a 186-amino-acid chain: Ribosome-recycling factor (186 aa).

This sequence belongs to the RRF family.

Its subcellular location is the cytoplasm. In terms of biological role, responsible for the release of ribosomes from messenger RNA at the termination of protein biosynthesis. May increase the efficiency of translation by recycling ribosomes from one round of translation to another. The protein is Ribosome-recycling factor of Porphyromonas gingivalis (strain ATCC BAA-308 / W83).